We begin with the raw amino-acid sequence, 145 residues long: Monooxygenase AacuP (145 aa).

This sequence belongs to the avfA family.

The protein operates within secondary metabolite biosynthesis. Functionally, monooxygenase; part of the gene cluster that mediates the biosynthesis of the tetrahydroxanthone dimer secalonic acid D. The pathway begins with the synthesis of atrochrysone thioester by the polyketide synthase AacuL. The atrochrysone carboxyl ACP thioesterase AacuM then breaks the thioester bond and releases the atrochrysone carboxylic acid from AacuL. Atrochrysone carboxylic acid is decarboxylated by the decarboxylase AacuI, and oxidized by the anthrone oxygenase AacuG to yield emodin. Emodin is then reduced to emodin hydroquinone by a yet unidentified oxidoreductase. A-ring reduction by the short chain dehydrogenase AacuN, dehydration by the scytalone dehydratase-like protein AacuK and probable spontaneous re-oxidation, results in overall deoxygenation to chrysophanol. Baeyer-Villiger oxidation by the Baeyer-Villiger monooxygenase (BVMO) AacuH then yields monodictyphenone. Monodictyphenone is transformed into compounds with the tetrahydroxanthone skeleton via methylesterification by the methyltransferase AacuQ, followed by the action of the flavin-dependent monooxygenase AacuC, the isomerase AacuP, and the short chain dehydrogenase/reductase AacuF or AacuD. AacuF and AacuD should accept the same compound as a substrate but perform the ketoreduction with a different stereoselectivity, thus yielding blennolides B and A, respectively. In the final step of the biosynthesis, the cytochrome P450 monooxygenase AacuE accepts blennolide B and/or blennolide A to conduct the dimerization reaction to furnish the tetrahydroxanthone dimers, secalonic acids D, B, and F. The sequence is that of Monooxygenase AacuP from Aspergillus aculeatus (strain ATCC 16872 / CBS 172.66 / WB 5094).